We begin with the raw amino-acid sequence, 100 residues long: Aspartyl/glutamyl-tRNA(Asn/Gln) amidotransferase subunit C (100 aa).

This sequence belongs to the GatC family. Heterotrimer of A, B and C subunits.

The enzyme catalyses L-glutamyl-tRNA(Gln) + L-glutamine + ATP + H2O = L-glutaminyl-tRNA(Gln) + L-glutamate + ADP + phosphate + H(+). The catalysed reaction is L-aspartyl-tRNA(Asn) + L-glutamine + ATP + H2O = L-asparaginyl-tRNA(Asn) + L-glutamate + ADP + phosphate + 2 H(+). In terms of biological role, allows the formation of correctly charged Asn-tRNA(Asn) or Gln-tRNA(Gln) through the transamidation of misacylated Asp-tRNA(Asn) or Glu-tRNA(Gln) in organisms which lack either or both of asparaginyl-tRNA or glutaminyl-tRNA synthetases. The reaction takes place in the presence of glutamine and ATP through an activated phospho-Asp-tRNA(Asn) or phospho-Glu-tRNA(Gln). The polypeptide is Aspartyl/glutamyl-tRNA(Asn/Gln) amidotransferase subunit C (Dictyoglomus turgidum (strain DSM 6724 / Z-1310)).